The primary structure comprises 501 residues: Acetyl-coenzyme A carboxylase carboxyl transferase subunit beta, chloroplastic (501 aa).

Positions 231-501 (LWIECENCYG…LIQNEKESRS (271 aa)) constitute a CoA carboxyltransferase N-terminal domain. Zn(2+) is bound by residues C235, C238, C254, and C257. A C4-type zinc finger spans residues 235–257 (CENCYGLNYKKILKSKMNICEHC).

The protein belongs to the AccD/PCCB family. As to quaternary structure, acetyl-CoA carboxylase is a heterohexamer composed of biotin carboxyl carrier protein, biotin carboxylase and 2 subunits each of ACCase subunit alpha and ACCase plastid-coded subunit beta (accD). The cofactor is Zn(2+).

The protein localises to the plastid. The protein resides in the chloroplast stroma. It carries out the reaction N(6)-carboxybiotinyl-L-lysyl-[protein] + acetyl-CoA = N(6)-biotinyl-L-lysyl-[protein] + malonyl-CoA. It functions in the pathway lipid metabolism; malonyl-CoA biosynthesis; malonyl-CoA from acetyl-CoA: step 1/1. Component of the acetyl coenzyme A carboxylase (ACC) complex. Biotin carboxylase (BC) catalyzes the carboxylation of biotin on its carrier protein (BCCP) and then the CO(2) group is transferred by the transcarboxylase to acetyl-CoA to form malonyl-CoA. This Lotus japonicus (Lotus corniculatus var. japonicus) protein is Acetyl-coenzyme A carboxylase carboxyl transferase subunit beta, chloroplastic.